We begin with the raw amino-acid sequence, 727 residues long: ATP-dependent zinc metalloprotease FtsH (727 aa).

Residues 1–6 (MQKAFR) are Cytoplasmic-facing. The chain crosses the membrane as a helical span at residues 7–27 (NVLVIAIIGVIIFGVFSYING). Residues 28–110 (NGNTPKQLSY…KVKEEEKQSV (83 aa)) lie on the Extracellular side of the membrane. The chain crosses the membrane as a helical span at residues 111–131 (FVSMLTTLIPVLIIAFLFIFF). The Cytoplasmic segment spans residues 132 to 727 (LSQAQGGGGG…PNDPNNPSNR (596 aa)). Position 205–212 (205–212 (GPPGTGKT)) interacts with ATP. Position 427 (histidine 427) interacts with Zn(2+). Residue glutamate 428 is part of the active site. The Zn(2+) site is built by histidine 431 and aspartate 503. Composition is skewed to basic and acidic residues over residues 645-684 (LEEG…DQLR) and 691-706 (NDQH…DTGH). Residues 645–727 (LEEGKEDMRE…PNDPNNPSNR (83 aa)) are disordered. Positions 710-727 (PNIDKPYNPNDPNNPSNR) are enriched in low complexity.

It in the central section; belongs to the AAA ATPase family. This sequence in the C-terminal section; belongs to the peptidase M41 family. In terms of assembly, homohexamer. It depends on Zn(2+) as a cofactor.

It localises to the cell membrane. Its function is as follows. Acts as a processive, ATP-dependent zinc metallopeptidase for both cytoplasmic and membrane proteins. Plays a role in the quality control of integral membrane proteins. The chain is ATP-dependent zinc metalloprotease FtsH from Staphylococcus haemolyticus (strain JCSC1435).